The primary structure comprises 122 residues: MIQPQTYLNVADNSGARKLMCIRVLGGGNRRYGFIGDKIIAVVKDATPNMAVKKSDVVEAVIVRTRKAVSRDSGMSIRFDDNAAVIINKDGNPRGTRVFGPVARELRDKNFTKIVSLAPEVL.

It belongs to the universal ribosomal protein uL14 family. Part of the 50S ribosomal subunit. Forms a cluster with proteins L3 and L19. In the 70S ribosome, L14 and L19 interact and together make contacts with the 16S rRNA in bridges B5 and B8.

Its function is as follows. Binds to 23S rRNA. Forms part of two intersubunit bridges in the 70S ribosome. In Nostoc punctiforme (strain ATCC 29133 / PCC 73102), this protein is Large ribosomal subunit protein uL14.